Reading from the N-terminus, the 174-residue chain is Shikimate kinase (174 aa).

Gly-15 to Thr-20 contacts ATP. Ser-19 is a Mg(2+) binding site. Residues Asp-37, Arg-61, and Gly-82 each contribute to the substrate site. An ATP-binding site is contributed by Arg-120. Arg-138 contributes to the substrate binding site.

It belongs to the shikimate kinase family. Monomer. Requires Mg(2+) as cofactor.

It localises to the cytoplasm. It carries out the reaction shikimate + ATP = 3-phosphoshikimate + ADP + H(+). It functions in the pathway metabolic intermediate biosynthesis; chorismate biosynthesis; chorismate from D-erythrose 4-phosphate and phosphoenolpyruvate: step 5/7. Its function is as follows. Catalyzes the specific phosphorylation of the 3-hydroxyl group of shikimic acid using ATP as a cosubstrate. The chain is Shikimate kinase from Staphylococcus aureus (strain Mu3 / ATCC 700698).